The primary structure comprises 215 residues: UPF0502 protein PputGB1_3531 (215 aa).

Belongs to the UPF0502 family.

The sequence is that of UPF0502 protein PputGB1_3531 from Pseudomonas putida (strain GB-1).